Reading from the N-terminus, the 203-residue chain is uncharacterized protein (203 aa).

Residues 174 to 203 are disordered; sequence LASSKNPRARSPGLDPLGSSETLWSHRGGH.

This is an uncharacterized protein from Homo sapiens (Human).